Reading from the N-terminus, the 245-residue chain is Spore membrane assembly protein 1 (245 aa).

Involved in spore and ascus formation. Required for the efficient assembly of the precursors of the prospore membrane to a continuous prospore membrane. The protein is Spore membrane assembly protein 1 (SMA1) of Saccharomyces cerevisiae (strain ATCC 204508 / S288c) (Baker's yeast).